The chain runs to 193 residues: Recombination protein RecR (193 aa).

The C4-type zinc-finger motif lies at 61-76; that stretch reads CTSCNALSESEVCEIC. In terms of domain architecture, Toprim spans 84–170; sequence SQLCMVLHPR…TFTKIAQGVP (87 aa).

Belongs to the RecR family.

May play a role in DNA repair. It seems to be involved in an RecBC-independent recombinational process of DNA repair. It may act with RecF and RecO. This is Recombination protein RecR from Helicobacter pylori (strain HPAG1).